Reading from the N-terminus, the 130-residue chain is C-type natriuretic peptide 2 (130 aa).

The first 22 residues, 1–22, serve as a signal peptide directing secretion; it reads MAASSSSFVPLVLLFLAIPVEP. The propeptide occupies 23–103; it reads RPSMTRDEAQ…LQQQSKTTRR (81 aa). Residues 57 to 77 are disordered; it reads ELLPRRPGPPRSFGASPGALR. A disulfide bond links cysteine 114 and cysteine 130.

Belongs to the natriuretic peptide family.

It is found in the secreted. In terms of biological role, exhibits natriuretic and vasodepressant activity. Has cGMP-stimulating activity. May help to regulate body fluid homeostasis in a variety of aquatic environments. The protein is C-type natriuretic peptide 2 of Takifugu rubripes (Japanese pufferfish).